The sequence spans 131 residues: Small ribosomal subunit protein uS8 (131 aa).

Belongs to the universal ribosomal protein uS8 family. As to quaternary structure, part of the 30S ribosomal subunit. Contacts proteins S5 and S12.

Its function is as follows. One of the primary rRNA binding proteins, it binds directly to 16S rRNA central domain where it helps coordinate assembly of the platform of the 30S subunit. This is Small ribosomal subunit protein uS8 from Burkholderia mallei (strain NCTC 10247).